Consider the following 131-residue polypeptide: Large-conductance mechanosensitive channel (131 aa).

3 helical membrane-spanning segments follow: residues 8–28, 30–50, and 72–92; these read FALK…GAFG, IVTS…VGGI, and GQFI…FMFI.

This sequence belongs to the MscL family. In terms of assembly, homopentamer.

The protein resides in the cell membrane. Channel that opens in response to stretch forces in the membrane lipid bilayer. May participate in the regulation of osmotic pressure changes within the cell. This chain is Large-conductance mechanosensitive channel, found in Alkaliphilus oremlandii (strain OhILAs) (Clostridium oremlandii (strain OhILAs)).